The chain runs to 37 residues: Potassium channel toxin alpha-KTx 2.19 (37 aa).

Disulfide bonds link C7/C28, C13/C33, and C17/C35.

As to expression, expressed by the venom gland.

The protein localises to the secreted. In terms of biological role, inhibitor of voltage-gated potassium channels. In Rhopalurus junceus (Caribbean blue scorpion), this protein is Potassium channel toxin alpha-KTx 2.19.